A 559-amino-acid polypeptide reads, in one-letter code: Oxygen-dependent choline dehydrogenase (559 aa).

4-33 (DYIIIGAGSAGNVLAARLTEESDVSVLLLE) contributes to the FAD binding site. The tract at residues 182–202 (EGFGPMDRTVTPKGRRASTAR) is disordered. The active-site Proton acceptor is the histidine 471.

This sequence belongs to the GMC oxidoreductase family. The cofactor is FAD.

It catalyses the reaction choline + A = betaine aldehyde + AH2. It carries out the reaction betaine aldehyde + NAD(+) + H2O = glycine betaine + NADH + 2 H(+). It participates in amine and polyamine biosynthesis; betaine biosynthesis via choline pathway; betaine aldehyde from choline (cytochrome c reductase route): step 1/1. In terms of biological role, involved in the biosynthesis of the osmoprotectant glycine betaine. Catalyzes the oxidation of choline to betaine aldehyde and betaine aldehyde to glycine betaine at the same rate. The protein is Oxygen-dependent choline dehydrogenase of Pectobacterium atrosepticum (strain SCRI 1043 / ATCC BAA-672) (Erwinia carotovora subsp. atroseptica).